Consider the following 670-residue polypeptide: UvrABC system protein B (670 aa).

One can recognise a Helicase ATP-binding domain in the interval Glu25–Arg412. ATP is bound at residue Gly38–Thr45. The short motif at Tyr91–Ile114 is the Beta-hairpin element. A Helicase C-terminal domain is found at Gln429–Ile582. Residues Ser631–Arg666 form the UVR domain.

This sequence belongs to the UvrB family. As to quaternary structure, forms a heterotetramer with UvrA during the search for lesions. Interacts with UvrC in an incision complex.

It localises to the cytoplasm. The UvrABC repair system catalyzes the recognition and processing of DNA lesions. A damage recognition complex composed of 2 UvrA and 2 UvrB subunits scans DNA for abnormalities. Upon binding of the UvrA(2)B(2) complex to a putative damaged site, the DNA wraps around one UvrB monomer. DNA wrap is dependent on ATP binding by UvrB and probably causes local melting of the DNA helix, facilitating insertion of UvrB beta-hairpin between the DNA strands. Then UvrB probes one DNA strand for the presence of a lesion. If a lesion is found the UvrA subunits dissociate and the UvrB-DNA preincision complex is formed. This complex is subsequently bound by UvrC and the second UvrB is released. If no lesion is found, the DNA wraps around the other UvrB subunit that will check the other stand for damage. The chain is UvrABC system protein B from Pseudomonas aeruginosa (strain ATCC 15692 / DSM 22644 / CIP 104116 / JCM 14847 / LMG 12228 / 1C / PRS 101 / PAO1).